A 586-amino-acid chain; its full sequence is Eukaryotic translation initiation factor 3 subunit D (586 aa).

The tract at residues 107-154 (FGRGGGTVFRGRAQRGGAGQRGGRAGFQRVGAGRGQGGDRYYDNRGAR) is disordered. Residues 108-131 (GRGGGTVFRGRAQRGGAGQRGGRA) show a composition bias toward gly residues. Positions 301-315 (SLDLVTVNENAADAP) are RNA gate. Positions 566–577 (FEEDDEAAEEEQ) are enriched in acidic residues. Positions 566 to 586 (FEEDDEAAEEEQEAKGEVEEA) are disordered.

This sequence belongs to the eIF-3 subunit D family. In terms of assembly, component of the eukaryotic translation initiation factor 3 (eIF-3) complex.

It localises to the cytoplasm. MRNA cap-binding component of the eukaryotic translation initiation factor 3 (eIF-3) complex, which is involved in protein synthesis of a specialized repertoire of mRNAs and, together with other initiation factors, stimulates binding of mRNA and methionyl-tRNAi to the 40S ribosome. The eIF-3 complex specifically targets and initiates translation of a subset of mRNAs involved in cell proliferation. In the eIF-3 complex, eif3d specifically recognizes and binds the 7-methylguanosine cap of a subset of mRNAs. The chain is Eukaryotic translation initiation factor 3 subunit D from Emericella nidulans (strain FGSC A4 / ATCC 38163 / CBS 112.46 / NRRL 194 / M139) (Aspergillus nidulans).